Consider the following 397-residue polypeptide: Purine ribonucleoside efflux pump NepI (397 aa).

Over 1–21 (MNENIAEKFRADGVARPNWSA) the chain is Cytoplasmic. Residues 22 to 42 (VFAVAFCVACLITVEFLPVSL) form a helical membrane-spanning segment. Over 43-54 (LTPMAQDLGISE) the chain is Periplasmic. Residues 55 to 75 (GVAGQSVTVTAFVAMFSSLFI) form a helical membrane-spanning segment. The Cytoplasmic segment spans residues 76–85 (TQIIQATDRR). A helical transmembrane segment spans residues 86–106 (YIVILFAVLLTASCLMVSFAN). S107 is a topological domain (periplasmic). A helical transmembrane segment spans residues 108 to 128 (FTLLLLGRACLGLALGGFWAM). Over 129 to 147 (SASLTMRLVPARTVPKALS) the chain is Cytoplasmic. A helical transmembrane segment spans residues 148-168 (VIFGAVSIALVIAAPLGSFLG). Over 169–175 (GIIGWRN) the chain is Periplasmic. A helical membrane pass occupies residues 176 to 196 (VFNAAAVMGVLCVIWVVKSLP). At 197 to 215 (SLPGEPSHQKQNMFSLLQR) the chain is on the cytoplasmic side. Residues 216–236 (PGVMAGMIAIFMSFAGQFAFF) traverse the membrane as a helical segment. Over 237-255 (TYIRPVYMNLAGFDVDGLT) the chain is Periplasmic. Residues 256–276 (LVLLSFGIASFVGTSFSSYVL) form a helical membrane-spanning segment. At 277–281 (KRSVK) the chain is on the cytoplasmic side. Residues 282-302 (LALAGAPLLLALSALTLIVWG) form a helical membrane-spanning segment. The Periplasmic segment spans residues 303-305 (SDK). A helical transmembrane segment spans residues 306–326 (TVAAAIAIIWGLAFALVPVGW). Topologically, residues 327–343 (STWITRSLADQAEKAGS) are cytoplasmic. A helical membrane pass occupies residues 344–364 (IQVAVIQLANTCGAAVGGYAL). Residues 365–366 (DN) lie on the Periplasmic side of the membrane. A helical transmembrane segment spans residues 367–387 (FGLLSPLALSGGLMLLTALVV). The Cytoplasmic segment spans residues 388–397 (AAKVRITPMS).

Belongs to the major facilitator superfamily. DHA1 family. NepI (TC 2.A.1.2.26) subfamily.

The protein resides in the cell inner membrane. It catalyses the reaction inosine(in) + H(+)(out) = inosine(out) + H(+)(in). The enzyme catalyses guanosine(in) + H(+)(out) = guanosine(out) + H(+)(in). Involved in the efflux of purine ribonucleosides, such as inosine and guanosine. The polypeptide is Purine ribonucleoside efflux pump NepI (Salmonella choleraesuis (strain SC-B67)).